A 151-amino-acid chain; its full sequence is uncharacterized protein (151 aa).

The N-acetyltransferase domain maps to 3-151 (IKIDDLTGRQ…PNSVFMTKKL (149 aa)).

The protein belongs to the acetyltransferase family.

This is an uncharacterized protein from Bacillus subtilis (strain 168).